The sequence spans 312 residues: D-alanine--D-alanine ligase (312 aa).

Positions 102-307 constitute an ATP-grasp domain; that stretch reads KKIFKMEGIP…FPELTDRLIK (206 aa). 136–191 serves as a coordination point for ATP; that stretch reads IKEVGVPAVVKANTQGSTIGITFVHVKEKMAEAIESALKYDQDVLVEQFVAGTEVT. The Mg(2+) site is built by Asp-262, Glu-274, and Asn-276.

The protein belongs to the D-alanine--D-alanine ligase family. Mg(2+) serves as cofactor. It depends on Mn(2+) as a cofactor.

Its subcellular location is the cytoplasm. The enzyme catalyses 2 D-alanine + ATP = D-alanyl-D-alanine + ADP + phosphate + H(+). It participates in cell wall biogenesis; peptidoglycan biosynthesis. Cell wall formation. In Desulforamulus reducens (strain ATCC BAA-1160 / DSM 100696 / MI-1) (Desulfotomaculum reducens), this protein is D-alanine--D-alanine ligase.